We begin with the raw amino-acid sequence, 306 residues long: Diterpene cyclase eriG (306 aa).

2 helical membrane passes run 13-33 and 43-63; these read IFFGFSWRDWSTTIIPGSIFA and ATLVKNYLFLVTWLTPYIYFF. The N-linked (GlcNAc...) asparagine glycan is linked to asparagine 64. Helical transmembrane passes span 115–135, 161–181, 213–233, and 265–285; these read FLPETLCWIATVAFLCLTSYG, IAPATPTSDAWVYAVSVWAGL, LIITFFALPAACWVLSLAGIF, and MFYTYIFCLILAFCALDGLGL.

This sequence belongs to the UbiA prenyltransferase family. Mg(2+) serves as cofactor.

It is found in the membrane. The catalysed reaction is (2E,6E,10E)-geranylgeranyl diphosphate = (-)-cyatha-3,12-diene + diphosphate. The protein operates within secondary metabolite biosynthesis. Its activity is regulated as follows. EDTA completely blocks the reaction. Its function is as follows. Diterpene cyclase; part of the gene cluster that mediates the biosynthesis of erinacines, cyathane-xylosides that show unique biological activities, including leishmanicidal activity, stimulating activity for nerve growth-factor synthesis, and agonistic activity toward the kappa opioid receptor. Within the pathway, eriG acts as a diterpene cyclase that converts geranylgeranyl diphosphate (GGPP) into cyatha-3,12-diene. EriG is unable to use geranyl diphosphate (GPP) or farnesyl diphosphate (FPP) as substrates. The first step of the erinacines biosynthesis pathway is catalyzed by the geranylgeranyl diphosphate (GGPP) synthase eriE via conversion of farnesyl pyrophosphate and isopentyl pyrophosphate into geranylgeranyl pyrophosphate (GGPP). GGPP is then substrate of the diterpene cyclase eriG for the production of cyatha-3,12-diene. The cytochrome P450 monooxygenase eriI then hydroxylates cyatha-3,12-diene at C-14 of the seven-membered ring to produce erinacol, which is further hydroxylated at C-15 by the cytochrome P450 monooxygenase eriC to yield cyathadiol. The cytochrome P450 monooxygenase eriA then catalyzes C-11 hydroxylation in the presence of the short chain dehydrogenase/reductase (SDR) eriH, which leads to the production of cyathatriol. The acetyltransferase eriL converts cyathatriol into 11-O-acetyl-cyathatriol. The SDR eriH catalyzes further oxidation of 11-O-acetyl-cyathatriol into 1-O-acetylcyathin A3. Finally, the glycosyl transferase eriJ tranfers xylose from UDP-xylose onto C-14 of 11-O-acetyl-cyathatriol to form eracine Q. EriJ is also able to convert 11-O-acetyl-cyathatriol to eracine Q2 by using UDP-D-glucose as cosubstrate, but at a lower rate. The chain is Diterpene cyclase eriG from Hericium erinaceus (Lion's mane mushroom).